The sequence spans 515 residues: Acetyltransferase sphE (515 aa).

Residues H184 and D438 each act as proton acceptor in the active site.

This sequence belongs to the plant acyltransferase family. Monomer.

It catalyses the reaction sphingofungin B + acetyl-CoA = sphingofungin C + CoA. It participates in secondary metabolite biosynthesis. Its function is as follows. Acetyltransferase; part of the gene cluster that mediates the biosynthesis of sphingofungins, bioactive molecules acting as sphingolipid inhibitors via inhibiting serine palmitoyl transferase (SPT). Within the pathway, sphE catalyzes the O-acetylation of the C-5 hydroxyl group of sphingofungin B to produce sphingofungin C. SphE can also convert sphingofungin B1 into sphingofungin C1 and sphingofungin B2 into sphingofungin C2. Sphingofungin biosynthesis starts with the PKS sphB that produces an C18 polyketide precursor 3-hydroxyoctadeca-4,10-dienoyl-ACP containing one delta-6 desaturation and one delta-12 desaturation. The aminoacyl transferase sphA uses the sphB product to produce 3-keto-presphingofungin by adding an aminomalonate molecule. SphF then reduces the C-3 ketone of 3-keto-presphingofungin which leads to presphingofungin. The cytochrome P450 monooxygenase sphH converts presphingofungin into sphingofungin B1 which is further converted to sphingofungin B by the dioxygenase sphC. SphC is also able to convert presphingofungin into sphingofungin B2. The acetyltransferase sphE acetylates sphingofungin B to produce sphingofungin C, but can also convert sphingofungin B1 into sphingofungin C1 and sphingofungin B2 into sphingofungin C2. Finally, sphingofungin C can be spontaneously converted into sphingofungin D. The protein is Acetyltransferase sphE of Aspergillus fumigatus (strain CBS 144.89 / FGSC A1163 / CEA10) (Neosartorya fumigata).